The chain runs to 328 residues: GTPase Obg 2 (328 aa).

In terms of domain architecture, Obg spans 1 to 139; that stretch reads MSFRREKFIE…HCVLLKLKIV (139 aa). The region spanning 140-309 is the OBG-type G domain; that stretch reads SDVGIIGMPN…LHAQVKKAVV (170 aa). GTP contacts are provided by residues 146–153, 171–175, 192–195, 259–262, and 290–292; these read GMPNAGKS, FTTLE, DIPG, NKCD, and GDE. Positions 153 and 173 each coordinate Mg(2+).

The protein belongs to the TRAFAC class OBG-HflX-like GTPase superfamily. OBG GTPase family. As to quaternary structure, monomer. Mg(2+) is required as a cofactor.

It is found in the cytoplasm. In terms of biological role, an essential GTPase which binds GTP, GDP and possibly (p)ppGpp with moderate affinity, with high nucleotide exchange rates and a fairly low GTP hydrolysis rate. Plays a role in control of the cell cycle, stress response, ribosome biogenesis and in those bacteria that undergo differentiation, in morphogenesis control. The sequence is that of GTPase Obg 2 from Anaplasma marginale (strain Florida).